The sequence spans 155 residues: Probable adenylyl-sulfate kinase (155 aa).

Glycine 9–threonine 16 serves as a coordination point for ATP. The active-site Phosphoserine intermediate is the serine 83. Residues leucine 134–arginine 155 are disordered.

This sequence belongs to the APS kinase family.

It catalyses the reaction adenosine 5'-phosphosulfate + ATP = 3'-phosphoadenylyl sulfate + ADP + H(+). Its pathway is sulfur metabolism; hydrogen sulfide biosynthesis; sulfite from sulfate: step 2/3. Functionally, catalyzes the synthesis of activated sulfate. This is Probable adenylyl-sulfate kinase (cysC) from Archaeoglobus fulgidus (strain ATCC 49558 / DSM 4304 / JCM 9628 / NBRC 100126 / VC-16).